A 297-amino-acid chain; its full sequence is MKELGRLITAMVTPFKTDGTVDYAQAQKLALGLLDSGSDGLVVVGTTGESPTVTWEEEHALFAAVKSAVGNRGKVIAGTGANSTQEALENTLKAEKIGVDACLLVVPYYNKPTQEGLYLHFKTIAEATKLPCILYNVPSRTITHMNPETVIRLSQIPNIVGIKEASGKLDDIAQIINNVRPDFTVWSGNDSDTLPMLAMGSYGVISVASHLVGNQIKDMITSFVSGNTEHAAAIHRHLTPLIRSLFVVSNPIPIKYALNYLGFEVGGLRLPMTEADEKTAALIRESLRGYTIDLPIK.

Residue T47 participates in pyruvate binding. The active-site Proton donor/acceptor is the Y135. K163 acts as the Schiff-base intermediate with substrate in catalysis. I205 contributes to the pyruvate binding site.

The protein belongs to the DapA family. Homotetramer; dimer of dimers.

It is found in the cytoplasm. It carries out the reaction L-aspartate 4-semialdehyde + pyruvate = (2S,4S)-4-hydroxy-2,3,4,5-tetrahydrodipicolinate + H2O + H(+). Its pathway is amino-acid biosynthesis; L-lysine biosynthesis via DAP pathway; (S)-tetrahydrodipicolinate from L-aspartate: step 3/4. In terms of biological role, catalyzes the condensation of (S)-aspartate-beta-semialdehyde [(S)-ASA] and pyruvate to 4-hydroxy-tetrahydrodipicolinate (HTPA). In Dehalococcoides mccartyi (strain CBDB1), this protein is 4-hydroxy-tetrahydrodipicolinate synthase.